A 413-amino-acid chain; its full sequence is Ribosomal RNA large subunit methyltransferase G (413 aa).

Residues 389-413 (EAEVEQAFDTETPHPQSALYGKPKA) form a disordered region.

It belongs to the methyltransferase superfamily. RlmG family.

The protein localises to the cytoplasm. The catalysed reaction is guanosine(1835) in 23S rRNA + S-adenosyl-L-methionine = N(2)-methylguanosine(1835) in 23S rRNA + S-adenosyl-L-homocysteine + H(+). Its function is as follows. Specifically methylates the guanine in position 1835 (m2G1835) of 23S rRNA. In Shewanella pealeana (strain ATCC 700345 / ANG-SQ1), this protein is Ribosomal RNA large subunit methyltransferase G.